Here is an 805-residue protein sequence, read N- to C-terminus: Hypoxia-inducible factor 1-alpha (805 aa).

The segment at 1–26 (MEGSVVVSEKKRISSERRKEKSRDAA) is disordered. Over residues 8-26 (SEKKRISSERRKEKSRDAA) the composition is skewed to basic and acidic residues. A bHLH domain is found at 17–70 (RRKEKSRDAARCRRSNESEVFYELSHELPLPHNVSSHLDKASIMRLDHQLPAVE). 2 PAS domains span residues 85–157 (DKQL…PAKK) and 229–300 (PHPS…TKGQ). The 44-residue stretch at 303–346 (TGQYRMLAKKGGYVWVETQATVIYNSKNSQPQCIVCVNYVLSEV) folds into the PAC domain. Residues Pro-404 and Pro-560 each carry the 4-hydroxyproline modification. The disordered stretch occupies residues 628 to 669 (KESTSAPVSPYNGNRSRTSSPVRPAKAVVDKTEKSRPGTPNL). Polar residues predominate over residues 629–648 (ESTSAPVSPYNGNRSRTSSP). The residue at position 782 (Asn-782) is a (3S)-3-hydroxyasparagine.

Efficient DNA binding requires heterodimerization of an alpha and a beta/ARNT subunit. In normoxia, is hydroxylated on Pro-404 and Pro-560. The hydroxylated prolines promote interaction with VHL, initiating rapid ubiquitination and subsequent proteasomal degradation. Under hypoxia, proline hydroxylation is impaired and ubiquitination is attenuated, resulting in stabilization. In terms of processing, in normoxia, is hydroxylated on Asn-782, thus abrogating interaction with CREBBP and EP300 and preventing transcriptional activation. Post-translationally, the iron and 2-oxoglutarate dependent 3-hydroxylation of asparagine is (S) stereospecific within HIF CTAD domains.

It localises to the cytoplasm. The protein resides in the nucleus. The protein localises to the nucleus speckle. Its activity is regulated as follows. Induced by reactive oxygen species (ROS). In terms of biological role, functions as a master transcriptional regulator of the adaptive response to hypoxia. Under hypoxic conditions, activates the transcription of over 40 genes, including erythropoietin, glucose transporters, glycolytic enzymes, vascular endothelial growth factor, HILPDA, and other genes whose protein products increase oxygen delivery or facilitate metabolic adaptation to hypoxia. Plays an essential role in embryonic vascularization, tumor angiogenesis and pathophysiology of ischemic disease. The protein is Hypoxia-inducible factor 1-alpha (hif1a) of Xenopus laevis (African clawed frog).